Consider the following 315-residue polypeptide: Ankyrin repeat domain-containing protein SOWAHD (315 aa).

The interval 1–39 (MAQLGGAANRAPTASLAPTSQSLRCAPQPRPSRADTGSL) is disordered. 3 ANK repeats span residues 112-141 (PREH…ELLL), 147-162 (TGYS…GRHE), and 186-216 (GGLT…DATR).

This sequence belongs to the SOWAH family.

This Homo sapiens (Human) protein is Ankyrin repeat domain-containing protein SOWAHD (SOWAHD).